The following is a 122-amino-acid chain: Small ribosomal subunit protein uS13 (122 aa).

The disordered stretch occupies residues 94 to 122 (GLPVRGQSTQKNARTRKGPRKTVAGKKGK). Basic residues predominate over residues 106-122 (ARTRKGPRKTVAGKKGK).

This sequence belongs to the universal ribosomal protein uS13 family. Part of the 30S ribosomal subunit. Forms a loose heterodimer with protein S19. Forms two bridges to the 50S subunit in the 70S ribosome.

Functionally, located at the top of the head of the 30S subunit, it contacts several helices of the 16S rRNA. In the 70S ribosome it contacts the 23S rRNA (bridge B1a) and protein L5 of the 50S subunit (bridge B1b), connecting the 2 subunits; these bridges are implicated in subunit movement. Contacts the tRNAs in the A and P-sites. The polypeptide is Small ribosomal subunit protein uS13 (Mycoplasmopsis synoviae (strain 53) (Mycoplasma synoviae)).